The primary structure comprises 268 residues: AN1-type zinc finger protein 1 (268 aa).

The residue at position 2 (Ala-2) is an N-acetylalanine. 2 AN1-type zinc fingers span residues 4–52 (LDIG…VVKE) and 58–106 (EHKS…VAKP). 16 residues coordinate Zn(2+): Cys-10, Cys-15, Cys-25, Cys-28, Cys-33, His-36, His-42, Cys-44, Cys-64, Cys-69, Cys-79, Cys-82, Cys-87, His-90, His-96, and Cys-98. The segment at 160–260 (QTERTYFQVY…EYLNDEEQFL (101 aa)) is ubiquitin-like.

In terms of assembly, associates with the 26S proteasome; this association occurs upon exposure to arsenite and is reduced in the presence of ATP. Interacts (via AN1-type 1 and 2 zinc fingers) with PSMD1; this interaction is increased upon arsenite treatment and occurs in an ATP-independent manner. Interacts with PSMC4. Interacts with PSMA1. Interacts (via its ubiquitin-like region) with VCP; this interaction occurs in an arsenite-dependent manner and is necessary for the recruitment of the ubiquitin-selective ATPase VCP to stress granules (SGs).

The protein resides in the cytoplasm. Its subcellular location is the stress granule. Functionally, plays a role in the regulation of cytoplasmic stress granules (SGs) turnover. SGs are dynamic and transient cytoplasmic ribonucleoprotein assemblies important for cellular protein homeostasis when protein production is suspended after acute exogenous stress. Associates with SGs and is involved in the efficient and specific arsenite-induced clearance process of SGs through the recruitment of the ubiquitin-selective ATPase VCP and the 26S proteasome. This process requires both complexes for efficient degradation of damaged ubiquitinated SG proteins during recovery from arsenite stress, and hence avoiding aberrant cytoplasmic SGs degradation via autophagy. This Mus musculus (Mouse) protein is AN1-type zinc finger protein 1.